We begin with the raw amino-acid sequence, 473 residues long: Cytochrome c-552 (473 aa).

The first 33 residues, 1–33 (MQHGDEMMKKMTGKSFALSALVAASFMAAGAMA), serve as a signal peptide directing secretion. His-93 is a heme c binding site. Residues Cys-121, Cys-124, and Lys-125 each contribute to the heme site. The heme c site is built by Cys-159, Cys-162, His-163, Cys-201, Cys-204, and His-205. The Ca(2+) site is built by Glu-207, Tyr-208, Lys-256, and Gln-258. Substrate is bound at residue Tyr-208. His-259 contacts substrate. 9 residues coordinate heme c: His-270, Cys-277, Cys-280, His-281, His-296, Cys-309, Cys-312, His-313, and His-388.

The protein belongs to the cytochrome c-552 family. Requires Ca(2+) as cofactor. The cofactor is heme c.

The protein resides in the periplasm. It carries out the reaction 6 Fe(III)-[cytochrome c] + NH4(+) + 2 H2O = 6 Fe(II)-[cytochrome c] + nitrite + 8 H(+). Its pathway is nitrogen metabolism; nitrate reduction (assimilation). In terms of biological role, catalyzes the reduction of nitrite to ammonia, consuming six electrons in the process. The protein is Cytochrome c-552 of Shewanella sp. (strain ANA-3).